A 34-amino-acid polypeptide reads, in one-letter code: Delta-theraphotoxin-Hm1b (34 aa).

Intrachain disulfides connect Cys2–Cys16, Cys9–Cys21, and Cys15–Cys28. Phenylalanine amide is present on Phe34.

The protein belongs to the neurotoxin 10 (Hwtx-1) family. 09 (HaTx) subfamily. As to expression, expressed by the venom gland.

It is found in the secreted. Gating-modifier toxin that potently and selectively acts on Nav1.1/SCN1A and Nav1.3/SCN3A. It enhances hNav1.1/SCN1A currents and delays fast inactivation of the channel (EC(50)=11.6 nM), leading to a sustained current. Similar effects are observed at Nav1.3/SCN3A (EC(50)=11.8 nM), but with less sustained currents. When tested on Nav1.2/SCN2A, the native toxin decreases the peak current by 50% at saturating concentration, whereas the recombinant toxin only shows a weak decrease of peak current. The native toxin specifically activates the voltage-gated sodium channel Nav1.1/SCN1A in somatosensory neurons to elicit acute pain and mechanical allodynia. When tested on Nav1.1/SCN1A, the toxin induces a hyperpolarising shift of the voltage-dependence of steady-state activation, and induces a depolarizing shift in the voltage dependence of inactivation. In addition, it does not modify the recovery from fast inactivation in Nav1.1/SCN1A. The toxin hydrophobic face probably interacts with the domain IV voltage-sensor of Nav1.1/SCN1A and Nav1.3/SCN3A and may trap the voltage-sensing S4 helix in a partially activated state. In vivo, intracerebroventricular injection into mice elicits convulsions, spasms, tremors and rapid death. When injected into mouse hindpaw, the toxin elicits an immediate and robust response to pain. However, intraplantar injection of toxin does not cause neurogenic inflammation or alter sensitivity to heat, indicative of a modality-specific effect on mechanosensitive neurons. The sequence is that of Delta-theraphotoxin-Hm1b from Heteroscodra maculata (Togo starburst tarantula).